A 502-amino-acid chain; its full sequence is Tyrosine-protein kinase receptor old-1 (502 aa).

Positions Met1–Cys19 are cleaved as a signal peptide. Topologically, residues Asn20–Val58 are extracellular. The helical transmembrane segment at Ile59–Ile79 threads the bilayer. Residues Phe80–Ser502 are Cytoplasmic-facing. Residues Leu99–Ser140 are disordered. Positions Ser127–Ser140 are enriched in polar residues. The region spanning Ile175–Phe473 is the Protein kinase domain. ATP is bound by residues Leu181–Ile189 and Lys213. Residue Asp321 is the Proton acceptor of the active site.

The protein belongs to the protein kinase superfamily. Tyr protein kinase family.

Its subcellular location is the cell membrane. The enzyme catalyses L-tyrosyl-[protein] + ATP = O-phospho-L-tyrosyl-[protein] + ADP + H(+). In terms of biological role, receptor tyrosine kinase which plays a role in promoting longevity and resistance to stresses including UV irradiation and high temperatures, probably downstream of daf-16. This Caenorhabditis elegans protein is Tyrosine-protein kinase receptor old-1.